A 379-amino-acid chain; its full sequence is Chaperone protein DnaJ (379 aa).

Residues 4–69 (DLYETLGVQK…QKRAAYDRYG (66 aa)) enclose the J domain. The segment at 137-215 (GKTAQIRVPT…CHGQGRVVEE (79 aa)) adopts a CR-type zinc-finger fold. Positions 150, 153, 167, 170, 189, 192, 203, and 206 each coordinate Zn(2+). CXXCXGXG motif repeat units lie at residues 150-157 (CDVCTGTG), 167-174 (CGTCQGTG), 189-196 (CPTCGGRG), and 203-210 (CTKCHGQG).

The protein belongs to the DnaJ family. As to quaternary structure, homodimer. It depends on Zn(2+) as a cofactor.

The protein localises to the cytoplasm. Participates actively in the response to hyperosmotic and heat shock by preventing the aggregation of stress-denatured proteins and by disaggregating proteins, also in an autonomous, DnaK-independent fashion. Unfolded proteins bind initially to DnaJ; upon interaction with the DnaJ-bound protein, DnaK hydrolyzes its bound ATP, resulting in the formation of a stable complex. GrpE releases ADP from DnaK; ATP binding to DnaK triggers the release of the substrate protein, thus completing the reaction cycle. Several rounds of ATP-dependent interactions between DnaJ, DnaK and GrpE are required for fully efficient folding. Also involved, together with DnaK and GrpE, in the DNA replication of plasmids through activation of initiation proteins. The protein is Chaperone protein DnaJ of Rhizobium meliloti (strain 1021) (Ensifer meliloti).